Here is a 695-residue protein sequence, read N- to C-terminus: DNA topoisomerase 4 subunit B (695 aa).

The disordered stretch occupies residues 1–53; sequence MSSSDKIPSLFGDDDALAPVPAAPFKASVEPRVEPTPRPIPPPPPSKTASAPG. Positions 36–46 are enriched in pro residues; it reads TPRPIPPPPPS. Residues Tyr55, Asn95, Asp122, 164 to 170, and Lys397 each bind ATP; that span reads GLHGVGA. A Toprim domain is found at 477 to 591; sequence AELFIVEGDS…GGHLFLALPP (115 aa). Positions 483, 556, and 558 each coordinate Mg(2+).

The protein belongs to the type II topoisomerase family. ParE type 1 subfamily. As to quaternary structure, heterotetramer composed of ParC and ParE. Mg(2+) serves as cofactor. It depends on Mn(2+) as a cofactor. Ca(2+) is required as a cofactor.

It catalyses the reaction ATP-dependent breakage, passage and rejoining of double-stranded DNA.. Functionally, topoisomerase IV is essential for chromosome segregation. It relaxes supercoiled DNA. Performs the decatenation events required during the replication of a circular DNA molecule. The polypeptide is DNA topoisomerase 4 subunit B (Caulobacter vibrioides (strain ATCC 19089 / CIP 103742 / CB 15) (Caulobacter crescentus)).